Here is a 372-residue protein sequence, read N- to C-terminus: MGFHSKNNSEYNGDFIILSSIYYWMILLYCIKFFLSKYLIYCMSLTYIDLFSGAGGFSLGFDRAGFHQLLSVEIEPHYCDTYRANFPDHQVLQQDLTTLSDDNLLRHINHRKVDVVIGGPPCQGFSMAGKIGRTFADDPRNHLFKEFVRVVKLTQPKFFVMENVARLFTHNSGKTRAEITEQFERLGYKVKCKVLNAADFGVPQLRSRIVFIGRKDGGEITFPEPSHTEYNTVGDAIGHFPKLNAGENSLILNHEAMNHSTQMLEKMSFVKNGGDRNDIPESLRPISGDVRKYIRYHSDKPSVCVTGDMRKVFHYEQNRALTVRELAALQSFPDDFVFLGKKIAQQQQVGNAVPPLLAQAIAEAVLKMNTNE.

One can recognise an SAM-dependent MTase C5-type domain in the interval 45-372; the sequence is LTYIDLFSGA…EAVLKMNTNE (328 aa). The active site involves Cys122.

This sequence belongs to the class I-like SAM-binding methyltransferase superfamily. C5-methyltransferase family.

The catalysed reaction is a 2'-deoxycytidine in DNA + S-adenosyl-L-methionine = a 5-methyl-2'-deoxycytidine in DNA + S-adenosyl-L-homocysteine + H(+). Functionally, a methylase that recognizes the double-stranded sequence 5'-GGTGA-3' and protects the DNA from cleavage by the HphI endonuclease. Probably methylates C-2 on the bottom strand. This chain is Type II methyltransferase M1.HphI (hphIAM), found in Haemophilus parahaemolyticus.